The sequence spans 434 residues: Putative nuclease OPG089 (434 aa).

Mg(2+)-binding residues include Asp33, Asp74, Glu168, Asp170, Asp196, and Asp198.

Belongs to the XPG/RAD2 endonuclease family. FEN1 subfamily. The cofactor is Mg(2+).

The protein localises to the virion. Functionally, putative nuclease that seems to be required for double-strand break repair, homologous recombination, and production of full-length viral genomic DNA. The chain is Putative nuclease OPG089 (OPG089) from Vaccinia virus (strain Western Reserve) (VACV).